The following is a 1081-amino-acid chain: DNA-directed RNA polymerase subunit beta (1081 aa).

The protein belongs to the RNA polymerase beta chain family. As to quaternary structure, in plastids the minimal PEP RNA polymerase catalytic core is composed of four subunits: alpha, beta, beta', and beta''. When a (nuclear-encoded) sigma factor is associated with the core the holoenzyme is formed, which can initiate transcription.

Its subcellular location is the plastid. It is found in the chloroplast. The catalysed reaction is RNA(n) + a ribonucleoside 5'-triphosphate = RNA(n+1) + diphosphate. Functionally, DNA-dependent RNA polymerase catalyzes the transcription of DNA into RNA using the four ribonucleoside triphosphates as substrates. The chain is DNA-directed RNA polymerase subunit beta from Cyanidium caldarium (Red alga).